The chain runs to 72 residues: Thiostrepton (72 aa).

Positions 1–55 (MDATAIHERWSVMSNASIGQEIGVEGLTGLDVDALEISDYVDETLLDGEDLTVTM) are excised as a propeptide. Positions 56 to 67 (IASASCTTCICT) form a cross-link, 4-(1-hydroxyethyl)-7-isoleucino-2-(threonin-O3-ylcarbonyl)-7,8-dihydroquinolin-8-ol (Ile-Thr). Residue S58 is modified to 2,3-didehydroalanine (Ser). The segment at residues 60 to 61 (SC) is a cross-link (thiazole-4-carboxylic acid (Ser-Cys)). The 5-amino-piperideine-2,5-dicarboxylic acid (Ser-Cys) (with S-69) cross-link spans 60–68 (SCTTCICTC). The 5-amino-piperideine-2,5-dicarboxylic acid (Ser-Ser) (with C-68) cross-link spans 60–69 (SCTTCICTCS). A (Z)-2,3-didehydrobutyrine modification is found at T63. Positions 63-64 (TC) form a cross-link, (4S)-thiazoline-4-carboxylic acid (Thr-Cys). A (3S,4R)-3,4-dihydroxyisoleucine modification is found at I65. Positions 65 to 66 (IC) form a cross-link, thiazole-4-carboxylic acid (Ile-Cys). A cross-link (thiazole-4-carboxylic acid (Thr-Cys)) is located at residues 67-68 (TC). The thiazole-4-carboxylic acid (Ser-Cys) cross-link spans 69 to 70 (SC). 2,3-didehydroalanine (Ser) is present on residues S71 and S72. At S72 the chain carries Serine amide.

This sequence belongs to the thiocillin family. Post-translationally, maturation of thiazole and oxazole containing antibiotics involves the enzymatic condensation of a Cys, Ser or Thr with the alpha-carbonyl of the preceding amino acid to form a thioether or ether bond, then dehydration to form a double bond with the alpha-amino nitrogen. Thiazoline or oxazoline ring are dehydrogenated to form thiazole or oxazole rings. Maturation of pyridinyl containing antibiotics involves the cross-linking of a Ser and a Cys-Ser pair usually separated by 7 or 8 residues along the peptide chain. The Ser residues are dehydrated to didehydroalanines, then bonded between their beta carbons. The alpha carbonyl of the Cys condenses with alpha carbon of the first Ser to form a pyridinyl ring. The ring may be multiply dehydrogenated to form a pyridine ring with loss of the amino nitrogen of the first Ser. In terms of processing, the amidation of Ser-72 probably does not occur by the same mechanism, oxidative cleavage of glycine, as in eukaryotes. Post-translationally, the structure of the 2,3-didehydrobutyrin is shown to be Z-isomer.

The protein resides in the secreted. Its function is as follows. Has bacteriocidal activity. Inhibits bacterial protein biosynthesis by acting on the elongation factor Tu (EF-Tu). In Streptomyces azureus, this protein is Thiostrepton (tpdA).